Here is a 111-residue protein sequence, read N- to C-terminus: Phosphoribosyl-AMP cyclohydrolase (111 aa).

Asp80 contributes to the Mg(2+) binding site. Cys81 contacts Zn(2+). Residues Asp82 and Asp84 each coordinate Mg(2+). Positions 97 and 104 each coordinate Zn(2+).

It belongs to the PRA-CH family. In terms of assembly, homodimer. Mg(2+) serves as cofactor. It depends on Zn(2+) as a cofactor.

It localises to the cytoplasm. The enzyme catalyses 1-(5-phospho-beta-D-ribosyl)-5'-AMP + H2O = 1-(5-phospho-beta-D-ribosyl)-5-[(5-phospho-beta-D-ribosylamino)methylideneamino]imidazole-4-carboxamide. The protein operates within amino-acid biosynthesis; L-histidine biosynthesis; L-histidine from 5-phospho-alpha-D-ribose 1-diphosphate: step 3/9. Functionally, catalyzes the hydrolysis of the adenine ring of phosphoribosyl-AMP. The protein is Phosphoribosyl-AMP cyclohydrolase of Mycobacterium marinum (strain ATCC BAA-535 / M).